The chain runs to 86 residues: Small ribosomal subunit protein bS16 (86 aa).

This sequence belongs to the bacterial ribosomal protein bS16 family.

The polypeptide is Small ribosomal subunit protein bS16 (Hamiltonella defensa subsp. Acyrthosiphon pisum (strain 5AT)).